The chain runs to 231 residues: MNKQLPLPIHQIDDATLENFYGDNNLLLLDSLRKNSSDLKQPFFYIWGDKGSGKTHLLRAFSNEYLINQRTAIYVPLSKSQYFSTAVLENLEQQELVCLDDLQSVIGNDEWELAIFDLFNRIKASGKTLLLISADKSPSALSVKLPDLNSRLTWGEIYQLNSLTDEQKIKVLQLAAYQRGFQLSDETANFLITRLARDMHTLFEALDLLDKASLQAQRNLTIPFVKKILNL.

It belongs to the DnaA family. HdA subfamily.

This is an uncharacterized protein from Haemophilus influenzae (strain ATCC 51907 / DSM 11121 / KW20 / Rd).